The primary structure comprises 911 residues: DNA polymerase I (911 aa).

In terms of domain architecture, 5'-3' exonuclease spans 186–280; that stretch reads VTPAQYPDLA…DTLRLQPWDR (95 aa). One can recognise a 3'-5' exonuclease domain in the interval 320 to 497; sequence RGGLLESGTV…LAAALDAELD (178 aa).

This sequence belongs to the DNA polymerase type-A family. Single-chain monomer with multiple functions.

It catalyses the reaction DNA(n) + a 2'-deoxyribonucleoside 5'-triphosphate = DNA(n+1) + diphosphate. Functionally, in addition to polymerase activity, this DNA polymerase exhibits 3'-5' and 5'-3' exonuclease activity. This chain is DNA polymerase I (polA), found in Mycobacterium leprae (strain TN).